Reading from the N-terminus, the 625-residue chain is Thrombopoietin receptor (625 aa).

The signal sequence occupies residues 1–25 (MPSWALFMVTSCLLLALPNQAQVTS). Residues 26-482 (QDVFLLALGT…RVSTGSETAW (457 aa)) lie on the Extracellular side of the membrane. N117 is a glycosylation site (N-linked (GlcNAc...) asparagine). 2 Fibronectin type-III domains span residues 178 to 270 (NATA…PVTV) and 383 to 479 (PTPS…TGSE). The WSXWS motif signature appears at 465 to 469 (WSAWS). Residues 483–504 (ITLVTALLLVLSLSALLGLLLL) form a helical membrane-spanning segment. The Cytoplasmic segment spans residues 505–625 (KWQFPAHYRR…YLPLSYWQQP (121 aa)). The Box 1 motif signature appears at 519 to 527 (LWPSLPDLH). Glycyl lysine isopeptide (Lys-Gly) (interchain with G-Cter in ubiquitin) cross-links involve residues K544 and K564. 2 positions are modified to phosphotyrosine: Y616 and Y621.

Belongs to the type I cytokine receptor family. Type 1 subfamily. Homodimer. Interacts with ATXN2L. Interacts with JAK2 and TYK2; these interactions increase MPL localization to the cell membrane. Interacts with THPO. Interacts with SHIP/INPP5D. Interacts with kinases BTK and SYK. Ubiquitination at Lys-544 and Lys-564 targets MPL for degradation by both the lysosomal and proteasomal pathways. The E3 ubiquitin-protein ligase CBL significantly contributes to this ubiquitination.

It localises to the cell membrane. Its subcellular location is the golgi apparatus. The protein localises to the cell surface. Receptor for thrombopoietin that regulates hematopoietic stem cell renewal, megakaryocyte differentiation, and platelet formation. Upon activation by THPO, induces rapid tyrosine phosphorylation and activation of JAK2, providing docking sites for many signaling proteins such as STAT5, SHIP/INPP5D, GRB2, SOS1 and PI3K. In turn, These signaling cascades lead to the proliferation, survival, and differentiation of megakaryocytes, ultimately leading to increased platelet production. Functionally, acts as an inhibitor of thrombopoietin signaling by promoting protein down-regulation of full-length isoform Mpl-fl. This chain is Thrombopoietin receptor (Mpl), found in Mus musculus (Mouse).